The following is a 925-amino-acid chain: Probable replication restart protein PriA (925 aa).

The Zn(2+) site is built by C645, C648, C654, C657, C672, C675, C685, and C688.

This sequence belongs to the helicase family. PriA subfamily. Interacts with DnaB (DR_0549). Component of the replication restart primosome. Requires Zn(2+) as cofactor.

In terms of biological role, initiates the restart of stalled replication forks, which reloads the replicative helicase on sites other than the origin of replication. Recognizes abandoned replication forks and remodels them to uncover a helicase loading site. Promotes assembly of the primosome at these replication forks. Recognizes and binds DNA at stalled replication forks, also binds single-stranded (ss)DNA. The chain is Probable replication restart protein PriA from Deinococcus radiodurans (strain ATCC 13939 / DSM 20539 / JCM 16871 / CCUG 27074 / LMG 4051 / NBRC 15346 / NCIMB 9279 / VKM B-1422 / R1).